The chain runs to 87 residues: Retinal rod rhodopsin-sensitive cGMP 3',5'-cyclic phosphodiesterase subunit gamma (87 aa).

Met-1 bears the N-acetylmethionine mark. Basic and acidic residues predominate over residues 1–12 (MNLEPPKAEIRS). The tract at residues 1–55 (MNLEPPKAEIRSATRVMGGPVTPRKGPPKFKQRQTRQFKSKPPKKGVQGFGDDIP) is disordered. Residues 26–44 (GPPKFKQRQTRQFKSKPPK) are compositionally biased toward basic residues.

Belongs to the rod/cone cGMP-PDE gamma subunit family. In terms of assembly, oligomer composed of two catalytic chains (alpha and beta), an inhibitory chain (gamma) and the delta chain.

The catalysed reaction is 3',5'-cyclic GMP + H2O = GMP + H(+). Its function is as follows. Participates in processes of transmission and amplification of the visual signal. cGMP-PDEs are the effector molecules in G-protein-mediated phototransduction in vertebrate rods and cones. The protein is Retinal rod rhodopsin-sensitive cGMP 3',5'-cyclic phosphodiesterase subunit gamma (PDE6G) of Bos taurus (Bovine).